The chain runs to 358 residues: UDP-N-acetylglucosamine--N-acetylmuramyl-(pentapeptide) pyrophosphoryl-undecaprenol N-acetylglucosamine transferase (358 aa).

UDP-N-acetyl-alpha-D-glucosamine-binding positions include 11–13, asparagine 120, arginine 161, serine 188, and glutamine 282; that span reads TGG.

Belongs to the glycosyltransferase 28 family. MurG subfamily.

It localises to the cell inner membrane. The enzyme catalyses di-trans,octa-cis-undecaprenyl diphospho-N-acetyl-alpha-D-muramoyl-L-alanyl-D-glutamyl-meso-2,6-diaminopimeloyl-D-alanyl-D-alanine + UDP-N-acetyl-alpha-D-glucosamine = di-trans,octa-cis-undecaprenyl diphospho-[N-acetyl-alpha-D-glucosaminyl-(1-&gt;4)]-N-acetyl-alpha-D-muramoyl-L-alanyl-D-glutamyl-meso-2,6-diaminopimeloyl-D-alanyl-D-alanine + UDP + H(+). Its pathway is cell wall biogenesis; peptidoglycan biosynthesis. In terms of biological role, cell wall formation. Catalyzes the transfer of a GlcNAc subunit on undecaprenyl-pyrophosphoryl-MurNAc-pentapeptide (lipid intermediate I) to form undecaprenyl-pyrophosphoryl-MurNAc-(pentapeptide)GlcNAc (lipid intermediate II). This is UDP-N-acetylglucosamine--N-acetylmuramyl-(pentapeptide) pyrophosphoryl-undecaprenol N-acetylglucosamine transferase from Parasynechococcus marenigrum (strain WH8102).